The sequence spans 130 residues: Small ribosomal subunit protein uS8 (130 aa).

This sequence belongs to the universal ribosomal protein uS8 family. As to quaternary structure, part of the 30S ribosomal subunit. Contacts proteins S5 and S12.

One of the primary rRNA binding proteins, it binds directly to 16S rRNA central domain where it helps coordinate assembly of the platform of the 30S subunit. The sequence is that of Small ribosomal subunit protein uS8 from Buchnera aphidicola subsp. Schizaphis graminum (strain Sg).